The chain runs to 195 residues: dCTP deaminase (195 aa).

DCTP contacts are provided by residues 105–110 (RSSLGR), aspartate 123, 131–133 (TLE), glutamine 152, tyrosine 166, lysine 173, and glutamine 177. Glutamate 133 serves as the catalytic Proton donor/acceptor. The segment at 159–195 (KSPAERPYGAERGSKYQGQTGPQASRIQGDREFGGDQ) is disordered. Residues 160–172 (SPAERPYGAERGS) are compositionally biased toward basic and acidic residues. Positions 174 to 184 (YQGQTGPQASR) are enriched in polar residues. The segment covering 186-195 (QGDREFGGDQ) has biased composition (basic and acidic residues).

The protein belongs to the dCTP deaminase family. Homotrimer.

It carries out the reaction dCTP + H2O + H(+) = dUTP + NH4(+). It participates in pyrimidine metabolism; dUMP biosynthesis; dUMP from dCTP (dUTP route): step 1/2. Its function is as follows. Catalyzes the deamination of dCTP to dUTP. In Natronomonas pharaonis (strain ATCC 35678 / DSM 2160 / CIP 103997 / JCM 8858 / NBRC 14720 / NCIMB 2260 / Gabara) (Halobacterium pharaonis), this protein is dCTP deaminase.